Reading from the N-terminus, the 610-residue chain is UvrABC system protein C (610 aa).

The GIY-YIG domain occupies His-16–Val-94. The 36-residue stretch at Asn-204–Val-239 folds into the UVR domain.

It belongs to the UvrC family. Interacts with UvrB in an incision complex.

Its subcellular location is the cytoplasm. The UvrABC repair system catalyzes the recognition and processing of DNA lesions. UvrC both incises the 5' and 3' sides of the lesion. The N-terminal half is responsible for the 3' incision and the C-terminal half is responsible for the 5' incision. This is UvrABC system protein C from Vibrio vulnificus (strain CMCP6).